Reading from the N-terminus, the 352-residue chain is Alpha-2-HS-glycoprotein (352 aa).

An N-terminal signal peptide occupies residues 1-18 (MKSLVLLLCFAQLWSCQS). In terms of domain architecture, Cystatin fetuin-A-type 1 spans 19 to 133 (APQGAGLGFR…QFRVLHAQCH (115 aa)). Intrachain disulfides connect cysteine 32/cysteine 343, cysteine 89/cysteine 100, cysteine 114/cysteine 132, cysteine 146/cysteine 149, cysteine 208/cysteine 219, and cysteine 230/cysteine 247. Asparagine 99 carries an N-linked (GlcNAc...) asparagine glycan. Serine 134 is subject to Phosphoserine. Residue threonine 135 is modified to Phosphothreonine. Serine 138 carries the phosphoserine modification. In terms of domain architecture, Cystatin fetuin-A-type 2 spans 144–250 (KFCPRCPILI…EEVSVACKLF (107 aa)). Residues asparagine 156 and asparagine 176 are each glycosylated (N-linked (GlcNAc...) asparagine). The span at 256 to 273 (PANANPAGPAPTVGQAAP) shows a compositional bias: low complexity. The segment at 256 to 280 (PANANPAGPAPTVGQAAPVAPPAGP) is disordered. A phosphoserine mark is found at serine 309, serine 313, serine 316, and serine 318. The tract at residues 319–338 (GEVLHSPKVGQPGDAGAAGP) is disordered. The span at 328 to 338 (GQPGDAGAAGP) shows a compositional bias: low complexity.

Belongs to the fetuin family. Post-translationally, undergoes complex post-translational modification involving N-glycosylation, and addition of fucose and sialic acid residues. Phosphorylation occurs at a serine residue. Phosphorylated by FAM20C in the extracellular medium. In terms of tissue distribution, synthesized in liver and secreted by the hepatocytes in the blood.

The protein localises to the secreted. Functionally, could inhibit both insulin-receptor tyrosine kinase activity and insulin-stimulated receptor autophosphorylation and, concomitantly, antagonize the mitogenic effect of the hormone in cultured rat hepatoma cells. The sequence is that of Alpha-2-HS-glycoprotein (Ahsg) from Rattus norvegicus (Rat).